The primary structure comprises 156 residues: Arginine repressor (156 aa).

This sequence belongs to the ArgR family.

It localises to the cytoplasm. It participates in amino-acid biosynthesis; L-arginine biosynthesis [regulation]. In terms of biological role, regulates arginine biosynthesis genes. The polypeptide is Arginine repressor (Citrobacter koseri (strain ATCC BAA-895 / CDC 4225-83 / SGSC4696)).